The sequence spans 757 residues: RNA-directed RNA polymerase catalytic subunit (757 aa).

Residues 50–82 (SEKGKWTTNTETGAPQLNPIDGPLPEDNEPSGY) form a disordered region. The span at 55-64 (WTTNTETGAP) shows a compositional bias: polar residues. 2 short sequence motifs (nuclear localization signal) span residues 187 to 195 (RKRRVRDNM) and 203 to 216 (RTIG…NKRS). Positions 249–256 (RGFVYFVE) are promoter-binding site. The RdRp catalytic domain occupies 286–483 (VRKMMTNSQD…GINMSKKKSY (198 aa)).

This sequence belongs to the influenza viruses polymerase PB1 family. Influenza RNA polymerase is composed of three subunits: PB1, PB2 and PA. Interacts (via N-terminus) with PA (via C-terminus). Interacts (via C-terminus) with PB2 (via N-terminus); this interaction is essential for transcription initiation. Post-translationally, phosphorylated by host PRKCA.

It is found in the host nucleus. Its subcellular location is the host cytoplasm. It catalyses the reaction RNA(n) + a ribonucleoside 5'-triphosphate = RNA(n+1) + diphosphate. In terms of biological role, RNA-dependent RNA polymerase which is responsible for replication and transcription of virus RNA segments. The transcription of viral mRNAs occurs by a unique mechanism called cap-snatching. 5' methylated caps of cellular mRNAs are cleaved after 10-13 nucleotides by PA. In turn, these short capped RNAs are used as primers by PB1 for transcription of viral mRNAs. During virus replication, PB1 initiates RNA synthesis and copy vRNA into complementary RNA (cRNA) which in turn serves as a template for the production of more vRNAs. The sequence is that of RNA-directed RNA polymerase catalytic subunit from Influenza A virus (strain A/Duck/Germany/1949 H10N7).